Reading from the N-terminus, the 419-residue chain is 3-isopropylmalate dehydratase large subunit (419 aa).

[4Fe-4S] cluster-binding residues include cysteine 302, cysteine 362, and cysteine 365.

Belongs to the aconitase/IPM isomerase family. LeuC type 2 subfamily. In terms of assembly, heterodimer of LeuC and LeuD. [4Fe-4S] cluster is required as a cofactor.

The catalysed reaction is (2R,3S)-3-isopropylmalate = (2S)-2-isopropylmalate. It functions in the pathway amino-acid biosynthesis; L-leucine biosynthesis; L-leucine from 3-methyl-2-oxobutanoate: step 2/4. Catalyzes the isomerization between 2-isopropylmalate and 3-isopropylmalate, via the formation of 2-isopropylmaleate. This is 3-isopropylmalate dehydratase large subunit from Sulfurimonas denitrificans (strain ATCC 33889 / DSM 1251) (Thiomicrospira denitrificans (strain ATCC 33889 / DSM 1251)).